A 335-amino-acid chain; its full sequence is NmrA-like family domain-containing oxidoreductase lnbB (335 aa).

NADP(+) contacts are provided by residues 14–18 (GTGNQ), 41–45 (RHPDS), 62–63 (DG), 83–85 (TNS), Lys142, and 166–169 (YYEQ).

Belongs to the NmrA-type oxidoreductase family.

The protein operates within secondary metabolite biosynthesis. Functionally, nmrA-like family domain-containing oxidoreductase; part of the lnb gene cluster that mediates the biosynthesis of diastereomeric piperazines. Lna and lnb clusters encode sets of enzymes that produce overlapping sets of previously undescribed metabolites such as piperazinomycin-like metabolites or morpholine. The lna and lnb biosynthetic pathways appear to be part of a signaling network that controls the formation of sclerotia, a resilient overwintering structure. One primary function of the non-canonical nonribosomal peptide synthetases lnaA and lnbA consists in the reduction of L-tyrosine. The presence in the clusters of tailoring enzymes such as the oxidoreductases lnaB, lnbB, lnaE or lnbE, as well as of the cytochrome P450 monooxygenases lnaC, lnaD, or lnbC, might explain formation of various diastereomeric piperazines. This is NmrA-like family domain-containing oxidoreductase lnbB from Aspergillus flavus (strain ATCC 200026 / FGSC A1120 / IAM 13836 / NRRL 3357 / JCM 12722 / SRRC 167).